The sequence spans 135 residues: Nucleoside diphosphate kinase (135 aa).

Residues lysine 9, phenylalanine 57, arginine 85, threonine 91, arginine 102, and asparagine 112 each coordinate ATP. The Pros-phosphohistidine intermediate role is filled by histidine 115.

It belongs to the NDK family. Homotetramer. The cofactor is Mg(2+).

It is found in the cytoplasm. It carries out the reaction a 2'-deoxyribonucleoside 5'-diphosphate + ATP = a 2'-deoxyribonucleoside 5'-triphosphate + ADP. The enzyme catalyses a ribonucleoside 5'-diphosphate + ATP = a ribonucleoside 5'-triphosphate + ADP. Major role in the synthesis of nucleoside triphosphates other than ATP. The ATP gamma phosphate is transferred to the NDP beta phosphate via a ping-pong mechanism, using a phosphorylated active-site intermediate. The protein is Nucleoside diphosphate kinase of Thermobifida fusca (strain YX).